The chain runs to 343 residues: Mediator of RNA polymerase II transcription subunit 2 (343 aa).

2 disordered regions span residues 105-141 and 252-277; these read KQQQ…AQQL and STNE…ISSN. Basic and acidic residues predominate over residues 107–132; sequence QQEEEQRRKHQAELEKNKRQQEHDAA. Polar residues predominate over residues 252-264; sequence STNEASTNNRNND.

This sequence belongs to the Mediator complex subunit 2 family. Component of the Mediator complex.

The protein localises to the nucleus. Its function is as follows. Component of the Mediator complex, a coactivator involved in the regulated transcription of nearly all RNA polymerase II-dependent genes. Mediator functions as a bridge to convey information from gene-specific regulatory proteins to the basal RNA polymerase II transcription machinery. Mediator is recruited to promoters by direct interactions with regulatory proteins and serves as a scaffold for the assembly of a functional preinitiation complex with RNA polymerase II and the general transcription factors. The chain is Mediator of RNA polymerase II transcription subunit 2 (MED2) from Eremothecium gossypii (strain ATCC 10895 / CBS 109.51 / FGSC 9923 / NRRL Y-1056) (Yeast).